Reading from the N-terminus, the 169-residue chain is Translationally-controlled tumor protein homolog (169 aa).

Positions 1–169 constitute a TCTP domain; sequence MIIYKDIVSG…FKDGLEEEKF (169 aa).

The protein belongs to the TCTP family.

The protein localises to the cytoplasm. Functionally, involved in calcium binding and microtubule stabilization. The sequence is that of Translationally-controlled tumor protein homolog from Branchiostoma belcheri (Amphioxus).